We begin with the raw amino-acid sequence, 143 residues long: Large ribosomal subunit protein uL16 (143 aa).

Residues 1–17 (MLQPKRTKFRKAHKGRI) show a composition bias toward basic residues. Positions 1-20 (MLQPKRTKFRKAHKGRIHGN) are disordered.

The protein belongs to the universal ribosomal protein uL16 family. As to quaternary structure, part of the 50S ribosomal subunit.

Binds 23S rRNA and is also seen to make contacts with the A and possibly P site tRNAs. This is Large ribosomal subunit protein uL16 from Zymomonas mobilis subsp. mobilis (strain ATCC 31821 / ZM4 / CP4).